The following is a 143-amino-acid chain: Small ribosomal subunit protein uS12 (143 aa).

The span at 1–20 (MGKCRGLRTARKLRSHRRDH) shows a compositional bias: basic residues. The disordered stretch occupies residues 1-26 (MGKCRGLRTARKLRSHRRDHKWHDKQ). A Glycyl lysine isopeptide (Lys-Gly) (interchain with G-Cter in SUMO2) cross-link involves residue Lys37. Lys54 is subject to N6-succinyllysine. Pro62 is subject to 3-hydroxyproline. Position 135 is an N6-acetyllysine (Lys135).

Belongs to the universal ribosomal protein uS12 family. Component of the 40S small ribosomal subunit. Part of the small subunit (SSU) processome, composed of more than 70 proteins and the RNA chaperone small nucleolar RNA (snoRNA) U3. In terms of assembly, (Microbial infection) Interacts with the African swine fever virus (ASFV) ubiquitin-conjugating enzyme UBCv1; this interaction probably plays a role in the viral regulation of host protein synthesis. Post-translationally, hydroxylation at Pro-62 affects translation termination efficiency.

Its subcellular location is the cytoplasm. The protein resides in the cytosol. It is found in the rough endoplasmic reticulum. It localises to the nucleus. The protein localises to the nucleolus. Its function is as follows. Component of the ribosome, a large ribonucleoprotein complex responsible for the synthesis of proteins in the cell. The small ribosomal subunit (SSU) binds messenger RNAs (mRNAs) and translates the encoded message by selecting cognate aminoacyl-transfer RNA (tRNA) molecules. The large subunit (LSU) contains the ribosomal catalytic site termed the peptidyl transferase center (PTC), which catalyzes the formation of peptide bonds, thereby polymerizing the amino acids delivered by tRNAs into a polypeptide chain. The nascent polypeptides leave the ribosome through a tunnel in the LSU and interact with protein factors that function in enzymatic processing, targeting, and the membrane insertion of nascent chains at the exit of the ribosomal tunnel. Plays an important role in translational accuracy. Part of the small subunit (SSU) processome, first precursor of the small eukaryotic ribosomal subunit. During the assembly of the SSU processome in the nucleolus, many ribosome biogenesis factors, an RNA chaperone and ribosomal proteins associate with the nascent pre-rRNA and work in concert to generate RNA folding, modifications, rearrangements and cleavage as well as targeted degradation of pre-ribosomal RNA by the RNA exosome. The protein is Small ribosomal subunit protein uS12 (RPS23) of Sus scrofa (Pig).